A 520-amino-acid polypeptide reads, in one-letter code: Leucine aminopeptidase 1 (520 aa).

Residues K288 and D293 each coordinate Mn(2+). The active site involves K300. Residues D313, D373, and E375 each contribute to the Mn(2+) site. R377 is an active-site residue.

Belongs to the peptidase M17 family. Homohexamer (dimer of homotrimers). Requires Mn(2+) as cofactor.

The protein localises to the cytoplasm. It carries out the reaction Release of an N-terminal amino acid, Xaa-|-Yaa-, in which Xaa is preferably Leu, but may be other amino acids including Pro although not Arg or Lys, and Yaa may be Pro. Amino acid amides and methyl esters are also readily hydrolyzed, but rates on arylamides are exceedingly low.. The catalysed reaction is Release of N-terminal proline from a peptide.. Presumably involved in the processing and regular turnover of intracellular proteins. Catalyzes the removal of unsubstituted N-terminal amino acids from various peptides. Possesses leucine aminopeptidase activity against the model substrate leucine-amido methyl coumarin. Possesses Cys-Gly dipeptidase activity. In addition, can cleave Cys-Leu and Leu-Cys dipeptides. In terms of biological role, functions as a molecular chaperone to protect proteins from heat-induced damage. This is Leucine aminopeptidase 1 from Arabidopsis thaliana (Mouse-ear cress).